A 645-amino-acid polypeptide reads, in one-letter code: Acetyl-coenzyme A synthetase (645 aa).

CoA contacts are provided by residues 190-193 (RGGR) and T309. Residues 385–387 (GEP), 409–414 (DTWWQT), D498, and R513 contribute to the ATP site. S521 provides a ligand contact to CoA. R524 provides a ligand contact to ATP. Mg(2+) contacts are provided by V535, H537, and V540. CoA is bound at residue R582. N6-acetyllysine is present on K607.

It belongs to the ATP-dependent AMP-binding enzyme family. Mg(2+) is required as a cofactor. Acetylated. Deacetylation by the SIR2-homolog deacetylase activates the enzyme.

It catalyses the reaction acetate + ATP + CoA = acetyl-CoA + AMP + diphosphate. Functionally, catalyzes the conversion of acetate into acetyl-CoA (AcCoA), an essential intermediate at the junction of anabolic and catabolic pathways. AcsA undergoes a two-step reaction. In the first half reaction, AcsA combines acetate with ATP to form acetyl-adenylate (AcAMP) intermediate. In the second half reaction, it can then transfer the acetyl group from AcAMP to the sulfhydryl group of CoA, forming the product AcCoA. The sequence is that of Acetyl-coenzyme A synthetase from Methylocella silvestris (strain DSM 15510 / CIP 108128 / LMG 27833 / NCIMB 13906 / BL2).